The following is a 125-amino-acid chain: Translation initiation factor 5A (125 aa).

The residue at position 35 (K35) is a Hypusine.

This sequence belongs to the eIF-5A family.

It localises to the cytoplasm. Functionally, functions by promoting the formation of the first peptide bond. The protein is Translation initiation factor 5A (eIF5A) of Methanoculleus marisnigri (strain ATCC 35101 / DSM 1498 / JR1).